The sequence spans 189 residues: Elongation factor P 2 (189 aa).

It belongs to the elongation factor P family.

It localises to the cytoplasm. It participates in protein biosynthesis; polypeptide chain elongation. Its function is as follows. Involved in peptide bond synthesis. Stimulates efficient translation and peptide-bond synthesis on native or reconstituted 70S ribosomes in vitro. Probably functions indirectly by altering the affinity of the ribosome for aminoacyl-tRNA, thus increasing their reactivity as acceptors for peptidyl transferase. This Mesorhizobium japonicum (strain LMG 29417 / CECT 9101 / MAFF 303099) (Mesorhizobium loti (strain MAFF 303099)) protein is Elongation factor P 2.